We begin with the raw amino-acid sequence, 230 residues long: Cytochrome c oxidase subunit 2 (230 aa).

Over 1–14 the chain is Mitochondrial intermembrane; it reads MAYPLQLGFQDATS. Residues 15-45 traverse the membrane as a helical segment; that stretch reads PIMEELLHFHDHTLMIVFLISSLVLYIISTM. At 46–59 the chain is on the mitochondrial matrix side; that stretch reads LTTKLTHTNTMDAQ. The chain crosses the membrane as a helical span at residues 60–87; sequence EVETIWTILPAIILILIALPSLRILYMM. Residues 88–230 are Mitochondrial intermembrane-facing; sequence DEINNPNLTI…NWTSSMMSTS (143 aa). Positions 161, 196, 198, 200, 204, and 207 each coordinate Cu cation. A Mg(2+)-binding site is contributed by Glu198. A Phosphotyrosine modification is found at Tyr218.

The protein belongs to the cytochrome c oxidase subunit 2 family. As to quaternary structure, component of the cytochrome c oxidase (complex IV, CIV), a multisubunit enzyme composed of 14 subunits. The complex is composed of a catalytic core of 3 subunits MT-CO1, MT-CO2 and MT-CO3, encoded in the mitochondrial DNA, and 11 supernumerary subunits COX4I, COX5A, COX5B, COX6A, COX6B, COX6C, COX7A, COX7B, COX7C, COX8 and NDUFA4, which are encoded in the nuclear genome. The complex exists as a monomer or a dimer and forms supercomplexes (SCs) in the inner mitochondrial membrane with NADH-ubiquinone oxidoreductase (complex I, CI) and ubiquinol-cytochrome c oxidoreductase (cytochrome b-c1 complex, complex III, CIII), resulting in different assemblies (supercomplex SCI(1)III(2)IV(1) and megacomplex MCI(2)III(2)IV(2)). Found in a complex with TMEM177, COA6, COX18, COX20, SCO1 and SCO2. Interacts with TMEM177 in a COX20-dependent manner. Interacts with COX20. Interacts with COX16. It depends on Cu cation as a cofactor.

It is found in the mitochondrion inner membrane. The catalysed reaction is 4 Fe(II)-[cytochrome c] + O2 + 8 H(+)(in) = 4 Fe(III)-[cytochrome c] + 2 H2O + 4 H(+)(out). Functionally, component of the cytochrome c oxidase, the last enzyme in the mitochondrial electron transport chain which drives oxidative phosphorylation. The respiratory chain contains 3 multisubunit complexes succinate dehydrogenase (complex II, CII), ubiquinol-cytochrome c oxidoreductase (cytochrome b-c1 complex, complex III, CIII) and cytochrome c oxidase (complex IV, CIV), that cooperate to transfer electrons derived from NADH and succinate to molecular oxygen, creating an electrochemical gradient over the inner membrane that drives transmembrane transport and the ATP synthase. Cytochrome c oxidase is the component of the respiratory chain that catalyzes the reduction of oxygen to water. Electrons originating from reduced cytochrome c in the intermembrane space (IMS) are transferred via the dinuclear copper A center (CU(A)) of subunit 2 and heme A of subunit 1 to the active site in subunit 1, a binuclear center (BNC) formed by heme A3 and copper B (CU(B)). The BNC reduces molecular oxygen to 2 water molecules using 4 electrons from cytochrome c in the IMS and 4 protons from the mitochondrial matrix. The chain is Cytochrome c oxidase subunit 2 (MT-CO2) from Ornithorhynchus anatinus (Duckbill platypus).